The following is a 154-amino-acid chain: Cell cycle regulator of non-homologous end joining (154 aa).

Methionine 1 carries the post-translational modification N-acetylmethionine. Residues 1-21 (METLKSENKKRVLPSWMTAPV) carry the KBM motif. A disordered region spans residues 77–144 (EEPTLVAPDK…RSPEEEEEDA (68 aa)). A compositionally biased stretch (low complexity) spans 95 to 105 (ASPHTSSPGSS). The XLM signature appears at 144 to 154 (ALKYVREIFFS).

In terms of assembly, interacts (via KBM motif) with XRCC5/Ku80 and XRCC6/Ku70 heterodimer. Interacts (via XLF motif) with TRIM28/KAP1, ATM, MRE11, NBN and RAD50. Interacts with splicing factor SF3B1. Interacts with ERCC6L2; this interaction is DNA independent.

The protein resides in the cytoplasm. Its subcellular location is the nucleus. It is found in the chromosome. In terms of biological role, cell-cycle-specific regulator of classical non-homologous end joining (NHEJ) of DNA double-strand break (DSB) repair, which can act both as an activator or inhibitor of NHEJ, depending on the cell cycle phase. Acts as a regulator of DNA repair pathway choice by specifically inhibiting classical NHEJ during the S and G2 phases, thereby promoting error-free repair by homologous recombination during cell cycle phases when sister chromatids are present. Preferentially protects single-stranded overhangs at break sites by inhibiting classical NHEJ, thereby creating a local environment that favors homologous recombination. Acts via interaction with XRCC5/Ku80 and XRCC6/Ku70. In contrast, acts as an activator of NHEJ during G1 phase of the cell cycle: promotes classical NHEJ in G1 phase cells via multivalent interactions that increase the affinity of DNA damage response proteins for DSB-associated chromatin. Also involved in immunoglobulin V(D)J recombination. May act as a regulator of proteasome. In case of infection by a retrovirus, may regulate the proteasome during the uncoating phase of retrovirus. The sequence is that of Cell cycle regulator of non-homologous end joining from Cricetulus griseus (Chinese hamster).